Here is a 530-residue protein sequence, read N- to C-terminus: Cilia- and flagella-associated protein 97 (530 aa).

S19 is modified (phosphoserine). Disordered stretches follow at residues T29–N83 and I116–P258. Over residues K35–K49 the composition is skewed to basic and acidic residues. Residues N50–Y63 show a composition bias toward polar residues. Basic and acidic residues predominate over residues K67–E82. Positions G129 to S139 are enriched in acidic residues. At T133 the chain carries Phosphothreonine. S138 and S139 each carry phosphoserine. A compositionally biased stretch (low complexity) spans S170–S203. S215 carries the phosphoserine modification. Residues T227 to P236 are compositionally biased toward polar residues. Phosphoserine is present on residues S245 and S327. Residues K372–K447 are a coiled coil. Disordered stretches follow at residues L395–K417 and Q483–L530. Polar residues predominate over residues S491–S501.

This sequence belongs to the CFAP97 family.

The chain is Cilia- and flagella-associated protein 97 from Pongo abelii (Sumatran orangutan).